Reading from the N-terminus, the 124-residue chain is Small ribosomal subunit protein uS13 (124 aa).

The segment at 95 to 124 (GLPVRGQRTKTNARTRKGPKRTIAGKKKAR) is disordered.

This sequence belongs to the universal ribosomal protein uS13 family. As to quaternary structure, part of the 30S ribosomal subunit. Forms a loose heterodimer with protein S19. Forms two bridges to the 50S subunit in the 70S ribosome.

In terms of biological role, located at the top of the head of the 30S subunit, it contacts several helices of the 16S rRNA. In the 70S ribosome it contacts the 23S rRNA (bridge B1a) and protein L5 of the 50S subunit (bridge B1b), connecting the 2 subunits; these bridges are implicated in subunit movement. Contacts the tRNAs in the A and P-sites. In Mycobacterium sp. (strain JLS), this protein is Small ribosomal subunit protein uS13.